Consider the following 389-residue polypeptide: Formate-dependent phosphoribosylglycinamide formyltransferase (389 aa).

N(1)-(5-phospho-beta-D-ribosyl)glycinamide contacts are provided by residues 12–13 (EL) and glutamate 72. Residues arginine 104, lysine 145, 150–155 (SSGKGQ), 185–188 (EEFI), and glutamate 193 contribute to the ATP site. An ATP-grasp domain is found at 109–301 (DLAAKELGLK…EFELHLRAVL (193 aa)). The Mg(2+) site is built by glutamate 258 and glutamate 271. N(1)-(5-phospho-beta-D-ribosyl)glycinamide contacts are provided by residues aspartate 278, lysine 350, and 357 to 358 (RR).

The protein belongs to the PurK/PurT family. As to quaternary structure, homodimer.

It catalyses the reaction N(1)-(5-phospho-beta-D-ribosyl)glycinamide + formate + ATP = N(2)-formyl-N(1)-(5-phospho-beta-D-ribosyl)glycinamide + ADP + phosphate + H(+). Its pathway is purine metabolism; IMP biosynthesis via de novo pathway; N(2)-formyl-N(1)-(5-phospho-D-ribosyl)glycinamide from N(1)-(5-phospho-D-ribosyl)glycinamide (formate route): step 1/1. Involved in the de novo purine biosynthesis. Catalyzes the transfer of formate to 5-phospho-ribosyl-glycinamide (GAR), producing 5-phospho-ribosyl-N-formylglycinamide (FGAR). Formate is provided by PurU via hydrolysis of 10-formyl-tetrahydrofolate. The sequence is that of Formate-dependent phosphoribosylglycinamide formyltransferase from Phocaeicola vulgatus (strain ATCC 8482 / DSM 1447 / JCM 5826 / CCUG 4940 / NBRC 14291 / NCTC 11154) (Bacteroides vulgatus).